A 95-amino-acid polypeptide reads, in one-letter code: MSVTIKDVTYIAELAKLRFSEPEMETMTNELNNILHYIAKLDEINTDGIQPLSGIYDPVNVLREDVELQPLTSSEVLHNAPDRQDRFFKVPKVIG.

Belongs to the GatC family. Heterotrimer of A, B and C subunits.

The catalysed reaction is L-glutamyl-tRNA(Gln) + L-glutamine + ATP + H2O = L-glutaminyl-tRNA(Gln) + L-glutamate + ADP + phosphate + H(+). It catalyses the reaction L-aspartyl-tRNA(Asn) + L-glutamine + ATP + H2O = L-asparaginyl-tRNA(Asn) + L-glutamate + ADP + phosphate + 2 H(+). Allows the formation of correctly charged Asn-tRNA(Asn) or Gln-tRNA(Gln) through the transamidation of misacylated Asp-tRNA(Asn) or Glu-tRNA(Gln) in organisms which lack either or both of asparaginyl-tRNA or glutaminyl-tRNA synthetases. The reaction takes place in the presence of glutamine and ATP through an activated phospho-Asp-tRNA(Asn) or phospho-Glu-tRNA(Gln). In Chlorobium chlorochromatii (strain CaD3), this protein is Aspartyl/glutamyl-tRNA(Asn/Gln) amidotransferase subunit C.